A 452-amino-acid polypeptide reads, in one-letter code: Bis(5'-adenosyl)-triphosphatase ENPP4 (452 aa).

Positions 1 to 15 are cleaved as a signal peptide; sequence MKLLVILLFSGLITG. The Extracellular portion of the chain corresponds to 16 to 406; it reads FRSDSSSSLP…DQWCINLPEA (391 aa). The Zn(2+) site is built by Asp-34 and Thr-70. Thr-70 (AMP-threonine intermediate) is an active-site residue. Positions 91 and 154 each coordinate substrate. 2 N-linked (GlcNAc...) asparagine glycosylation sites follow: Asn-155 and Asn-166. The Zn(2+) site is built by Asp-189, His-193, Asp-237, and His-238. Asp-189 is a binding site for substrate. A disulfide bridge connects residues Cys-254 and Cys-287. Asn-276 carries an N-linked (GlcNAc...) asparagine glycan. Zn(2+) is bound at residue His-335. Residues Cys-393 and Cys-400 are joined by a disulfide bond. The helical transmembrane segment at 407 to 427 threads the bilayer; that stretch reads IAIVIGSLLVLTMLTCLIIIM. The Cytoplasmic portion of the chain corresponds to 428-452; the sequence is QNRLSVPRPFSRLQLQEDDDDPLIG.

Belongs to the nucleotide pyrophosphatase/phosphodiesterase family. Zn(2+) serves as cofactor.

The protein localises to the cell membrane. It catalyses the reaction P(1),P(3)-bis(5'-adenosyl) triphosphate + H2O = AMP + ADP + 2 H(+). Functionally, hydrolyzes extracellular Ap3A into AMP and ADP, and Ap4A into AMP and ATP. Ap3A and Ap4A are diadenosine polyphosphates thought to induce proliferation of vascular smooth muscle cells. Acts as a procoagulant, mediating platelet aggregation at the site of nascent thrombus via release of ADP from Ap3A and activation of ADP receptors. The polypeptide is Bis(5'-adenosyl)-triphosphatase ENPP4 (ENPP4) (Pongo abelii (Sumatran orangutan)).